The following is a 92-amino-acid chain: MPRSLKKGPFIDLHLLKKVEKAVESGDKKPLKTWSRRSMIIPSMIGLTIAVHNGRQHVPVFVTEEMIGHKLGEFAPTRTYRGHAADKKAKKR.

It belongs to the universal ribosomal protein uS19 family.

In terms of biological role, protein S19 forms a complex with S13 that binds strongly to the 16S ribosomal RNA. The chain is Small ribosomal subunit protein uS19 from Vibrio campbellii (strain ATCC BAA-1116).